The sequence spans 487 residues: DNA-dependent metalloprotease SPRTN (487 aa).

The residue at position 1 (Met1) is an N-acetylmethionine. The region spanning 45 to 212 (LQGLFVLFND…KTCGGTYIKI (168 aa)) is the SprT-like domain. His111 contacts Zn(2+). Glu112 is a catalytic residue. Zn(2+) is bound by residues His115 and His130. The tract at residues 219–248 (SKKGKGKTKLRKQPVSEAENKDKPNRGEKQ) is disordered. The span at 220–230 (KKGKGKTKLRK) shows a compositional bias: basic residues. The residue at position 230 (Lys230) is an N6-acetyllysine. Positions 236-247 (AENKDKPNRGEK) are enriched in basic and acidic residues. The SHP-box motif lies at 253–261 (FTGKGYVLG). Phosphoserine is present on Ser267. Polar residues predominate over residues 280–289 (SQEPLSQDHS). Residues 280 to 317 (SQEPLSQDHSANALRPHSKTEVKFEQNGPSKKTSVASP) are disordered. Lys302 is covalently cross-linked (Glycyl lysine isopeptide (Lys-Gly) (interchain with G-Cter in SUMO2)). A compositionally biased stretch (polar residues) spans 306–317 (NGPSKKTSVASP). The PIP-box motif lies at 324–331 (QNVLSNYF). A Glycyl lysine isopeptide (Lys-Gly) (interchain with G-Cter in SUMO2); alternate cross-link involves residue Lys340. Lys340 participates in a covalent cross-link: Glycyl lysine isopeptide (Lys-Gly) (interchain with G-Cter in ubiquitin); alternate. The interval 347–379 (GSPVKSLTVGDSTTKSVSAGSQRRVTSSRTSLR) is disordered. Position 373 is a phosphoserine (Ser373). The short motif at 401–412 (GKLPSKRPRIED) is the Nuclear localization signal element. Lys413 participates in a covalent cross-link: Glycyl lysine isopeptide (Lys-Gly) (interchain with G-Cter in ubiquitin). Residues Lys422 and Lys423 each participate in a glycyl lysine isopeptide (Lys-Gly) (interchain with G-Cter in SUMO2) cross-link. The interval 427-455 (QSGGGDVTSSSHPPAAAQSPSGASGQSRV) is disordered. Residues 435 to 453 (SSSHPPAAAQSPSGASGQS) are compositionally biased toward low complexity. The UBZ4-type zinc finger occupies 455-482 (VVHCPVCQDEVSETQINEHLDWCLERDS). Residues Cys458, Cys461, His473, and Cys477 each contribute to the Zn(2+) site. A Glycyl lysine isopeptide (Lys-Gly) (interchain with G-Cter in SUMO2) cross-link involves residue Lys486.

It belongs to the Spartan family. In terms of assembly, homodimer. Interacts (VIA PIP-box) with PCNA (when ubiquitinated). Interacts (via its SHP-box) with VCP/p97. Interacts with RAD18. Interacts with KCTD13 and POLD3. Zn(2+) is required as a cofactor. Post-translationally, autocatalytically cleaved in response to double-stranded DNA-binding: autocatalytic cleavage takes place in trans and leads to inactivation. Monoubiquitinated; monoubiquitination promotes exclusion from chromatin. Deubiquitinated by VCPIP1: deubiquitination is required for subsequent acetylation and recruitment to chromatin and DNA damage sites. In terms of processing, acetylated following deubiquitination by VCPIP1, leading to recruitment to chromatin and DNA damage sites. Post-translationally, phosphorylation by CHEK1 promotes recruitment to chromatin.

The protein resides in the nucleus. It is found in the chromosome. Its activity is regulated as follows. DNA-binding activates the protease activity: single-stranded DNA-binding specifically activates ability to cleave covalent DNA-protein cross-links (DPCs). In contrast, double-stranded DNA-binding specifically activates autocatalytic cleavage, and subsequent inactivation. Its function is as follows. DNA-dependent metalloendopeptidase that mediates the proteolytic cleavage of covalent DNA-protein cross-links (DPCs) during DNA synthesis, thereby playing a key role in maintaining genomic integrity. DPCs are highly toxic DNA lesions that interfere with essential chromatin transactions, such as replication and transcription, and which are induced by reactive agents, such as UV light or formaldehyde. Associates with the DNA replication machinery and specifically removes DPCs during DNA synthesis. Catalyzes proteolytic cleavage of the HMCES DNA-protein cross-link following unfolding by the BRIP1/FANCJ helicase. Acts as a pleiotropic protease for DNA-binding proteins cross-linked with DNA, such as TOP1, TOP2A, histones H3 and H4. Mediates degradation of DPCs that are not ubiquitinated, while it is not able to degrade ubiquitinated DPCs. SPRTN activation requires polymerase collision with DPCs followed by helicase bypass of DPCs. Involved in recruitment of VCP/p97 to sites of DNA damage. Also acts as an activator of CHEK1 during normal DNA replication by mediating proteolytic cleavage of CHEK1, thereby promoting CHEK1 removal from chromatin and subsequent activation. Does not activate CHEK1 in response to DNA damage. May also act as a 'reader' of ubiquitinated PCNA: recruited to sites of UV damage and interacts with ubiquitinated PCNA and RAD18, the E3 ubiquitin ligase that monoubiquitinates PCNA. Facilitates chromatin association of RAD18 and is required for efficient PCNA monoubiquitination, promoting a feed-forward loop to enhance PCNA ubiquitination and translesion DNA synthesis. This chain is DNA-dependent metalloprotease SPRTN, found in Bos taurus (Bovine).